The primary structure comprises 78 residues: MASLIQVRDLLALRGRMEATQISHTLHAPQPMIDAMLNQLEIMGKAVRIPEEPDGCLSGSCKSCPEGKACLREWWALR.

Positions 56, 61, 64, and 70 each coordinate iron-sulfur cluster.

This sequence belongs to the FeoC family.

Functionally, may function as a transcriptional regulator that controls feoABC expression. In Salmonella heidelberg (strain SL476), this protein is Probable [Fe-S]-dependent transcriptional repressor.